Reading from the N-terminus, the 66-residue chain is Large ribosomal subunit protein bL35 (66 aa).

Over residues 1–46 (MPKMKTHRASAKRFKRTANGGLKRHHAFTGHRFHGKTKKQRRHLRK) the composition is skewed to basic residues. The segment at 1–52 (MPKMKTHRASAKRFKRTANGGLKRHHAFTGHRFHGKTKKQRRHLRKPAMVSR) is disordered.

It belongs to the bacterial ribosomal protein bL35 family.

The protein is Large ribosomal subunit protein bL35 of Lactobacillus acidophilus (strain ATCC 700396 / NCK56 / N2 / NCFM).